A 354-amino-acid polypeptide reads, in one-letter code: Inactive ADP-ribosyltransferase ARH2 (354 aa).

Ser27 is subject to Phosphoserine.

It belongs to the ADP-ribosylglycohydrolase family.

It localises to the cytoplasm. Its subcellular location is the myofibril. It is found in the sarcomere. In terms of biological role, required for myofibril assembly and outgrowth of the cardiac chambers in the developing heart. Appears to be catalytically inactive, showing no activity against O-acetyl-ADP-ribose. In Pongo abelii (Sumatran orangutan), this protein is Inactive ADP-ribosyltransferase ARH2 (ADPRHL1).